Here is a 114-residue protein sequence, read N- to C-terminus: T cell receptor beta variable 28 (114 aa).

The first 26 residues, methionine 1 to serine 26, serve as a signal peptide directing secretion. The 88-residue stretch at serine 27–leucine 114 folds into the Ig-like domain. Cysteines 42 and 110 form a disulfide. The N-linked (GlcNAc...) asparagine glycan is linked to asparagine 103.

As to quaternary structure, alpha-beta TR is a heterodimer composed of an alpha and beta chain; disulfide-linked. The alpha-beta TR is associated with the transmembrane signaling CD3 coreceptor proteins to form the TR-CD3 (TcR or TCR). The assembly of alpha-beta TR heterodimers with CD3 occurs in the endoplasmic reticulum where a single alpha-beta TR heterodimer associates with one CD3D-CD3E heterodimer, one CD3G-CD3E heterodimer and one CD247 homodimer forming a stable octameric structure. CD3D-CD3E and CD3G-CD3E heterodimers preferentially associate with TR alpha and TR beta chains, respectively. The association of the CD247 homodimer is the last step of TcR assembly in the endoplasmic reticulum and is required for transport to the cell surface.

It is found in the cell membrane. Its function is as follows. V region of the variable domain of T cell receptor (TR) beta chain that participates in the antigen recognition. Alpha-beta T cell receptors are antigen specific receptors which are essential to the immune response and are present on the cell surface of T lymphocytes. Recognize peptide-major histocompatibility (MH) (pMH) complexes that are displayed by antigen presenting cells (APC), a prerequisite for efficient T cell adaptive immunity against pathogens. Binding of alpha-beta TR to pMH complex initiates TR-CD3 clustering on the cell surface and intracellular activation of LCK that phosphorylates the ITAM motifs of CD3G, CD3D, CD3E and CD247 enabling the recruitment of ZAP70. In turn ZAP70 phosphorylates LAT, which recruits numerous signaling molecules to form the LAT signalosome. The LAT signalosome propagates signal branching to three major signaling pathways, the calcium, the mitogen-activated protein kinase (MAPK) kinase and the nuclear factor NF-kappa-B (NF-kB) pathways, leading to the mobilization of transcription factors that are critical for gene expression and essential for T cell growth and differentiation. The T cell repertoire is generated in the thymus, by V-(D)-J rearrangement. This repertoire is then shaped by intrathymic selection events to generate a peripheral T cell pool of self-MH restricted, non-autoaggressive T cells. Post-thymic interaction of alpha-beta TR with the pMH complexes shapes TR structural and functional avidity. This is T cell receptor beta variable 28 from Homo sapiens (Human).